The primary structure comprises 186 residues: Peptidyl-tRNA hydrolase (186 aa).

Tyr14 contacts tRNA. His19 (proton acceptor) is an active-site residue. Residues Phe64, Asn66, and Asn112 each coordinate tRNA.

It belongs to the PTH family. Monomer.

The protein resides in the cytoplasm. It carries out the reaction an N-acyl-L-alpha-aminoacyl-tRNA + H2O = an N-acyl-L-amino acid + a tRNA + H(+). Hydrolyzes ribosome-free peptidyl-tRNAs (with 1 or more amino acids incorporated), which drop off the ribosome during protein synthesis, or as a result of ribosome stalling. Its function is as follows. Catalyzes the release of premature peptidyl moieties from peptidyl-tRNA molecules trapped in stalled 50S ribosomal subunits, and thus maintains levels of free tRNAs and 50S ribosomes. This is Peptidyl-tRNA hydrolase from Listeria monocytogenes serotype 4b (strain CLIP80459).